Here is a 571-residue protein sequence, read N- to C-terminus: Urease subunit alpha (571 aa).

The Urease domain maps to 129–571 (GGIDSHIHFI…LPMAQRYFLF (443 aa)). Positions 134, 136, and 217 each coordinate Ni(2+). N6-carboxylysine is present on Lys217. His219 contributes to the substrate binding site. Positions 246 and 272 each coordinate Ni(2+). The active-site Proton donor is the His320. Asp360 contacts Ni(2+).

The protein belongs to the metallo-dependent hydrolases superfamily. Urease alpha subunit family. As to quaternary structure, heterotrimer of UreA (gamma), UreB (beta) and UreC (alpha) subunits. Three heterotrimers associate to form the active enzyme. Ni cation is required as a cofactor. Post-translationally, carboxylation allows a single lysine to coordinate two nickel ions.

It localises to the cytoplasm. The catalysed reaction is urea + 2 H2O + H(+) = hydrogencarbonate + 2 NH4(+). It functions in the pathway nitrogen metabolism; urea degradation; CO(2) and NH(3) from urea (urease route): step 1/1. The polypeptide is Urease subunit alpha (Cupriavidus necator (strain ATCC 17699 / DSM 428 / KCTC 22496 / NCIMB 10442 / H16 / Stanier 337) (Ralstonia eutropha)).